Consider the following 152-residue polypeptide: Calmodulin-like protein 2 (152 aa).

4 consecutive EF-hand domains span residues 1-36 (MDRGELSRVFQMFDKNGDGKIAKNELKDFFKSVGIM), 37-72 (VPENEINEMIAKMDVNGDGAMDIDEFGSLYQEMVEE), 74-109 (EEEEDMREAFRVFDQNGDGFITDEELRSVLASMGLK), and 112-147 (RTLEDCKKMISKVDVDGDGMVNFKEFKQMMRGGGFA). Ca(2+) contacts are provided by Asp14, Asn16, Asp18, Lys20, Glu25, Asp50, Asn52, Asp54, Glu61, Asp87, Asn89, Asp91, Glu98, Asp125, Asp127, Asp129, Met131, and Glu136.

It belongs to the calmodulin family.

Functionally, potential calcium sensor that is required for pollen tube attraction for ovule fertilization. This Arabidopsis thaliana (Mouse-ear cress) protein is Calmodulin-like protein 2 (CML2).